The chain runs to 311 residues: Aspartate carbamoyltransferase catalytic subunit (311 aa).

2 residues coordinate carbamoyl phosphate: Arg-52 and Thr-53. Residue Lys-80 coordinates L-aspartate. Residues Arg-102, His-131, and Gln-134 each coordinate carbamoyl phosphate. Positions 164 and 216 each coordinate L-aspartate. Positions 259 and 260 each coordinate carbamoyl phosphate.

The protein belongs to the aspartate/ornithine carbamoyltransferase superfamily. ATCase family. As to quaternary structure, heterododecamer (2C3:3R2) of six catalytic PyrB chains organized as two trimers (C3), and six regulatory PyrI chains organized as three dimers (R2).

It carries out the reaction carbamoyl phosphate + L-aspartate = N-carbamoyl-L-aspartate + phosphate + H(+). It functions in the pathway pyrimidine metabolism; UMP biosynthesis via de novo pathway; (S)-dihydroorotate from bicarbonate: step 2/3. In terms of biological role, catalyzes the condensation of carbamoyl phosphate and aspartate to form carbamoyl aspartate and inorganic phosphate, the committed step in the de novo pyrimidine nucleotide biosynthesis pathway. The chain is Aspartate carbamoyltransferase catalytic subunit from Lactiplantibacillus plantarum (strain ATCC BAA-793 / NCIMB 8826 / WCFS1) (Lactobacillus plantarum).